Reading from the N-terminus, the 196-residue chain is ATP-dependent Clp protease proteolytic subunit 1 (196 aa).

Catalysis depends on S96, which acts as the Nucleophile. H121 is an active-site residue.

The protein belongs to the peptidase S14 family. As to quaternary structure, fourteen ClpP subunits assemble into 2 heptameric rings which stack back to back to give a disk-like structure with a central cavity, resembling the structure of eukaryotic proteasomes.

The protein resides in the cytoplasm. It carries out the reaction Hydrolysis of proteins to small peptides in the presence of ATP and magnesium. alpha-casein is the usual test substrate. In the absence of ATP, only oligopeptides shorter than five residues are hydrolyzed (such as succinyl-Leu-Tyr-|-NHMec, and Leu-Tyr-Leu-|-Tyr-Trp, in which cleavage of the -Tyr-|-Leu- and -Tyr-|-Trp bonds also occurs).. Cleaves peptides in various proteins in a process that requires ATP hydrolysis. Has a chymotrypsin-like activity. Plays a major role in the degradation of misfolded proteins. This is ATP-dependent Clp protease proteolytic subunit 1 from Prochlorococcus marinus subsp. pastoris (strain CCMP1986 / NIES-2087 / MED4).